We begin with the raw amino-acid sequence, 385 residues long: Homoserine O-succinyltransferase (385 aa).

The 310-residue stretch at 46 to 355 folds into the AB hydrolase-1 domain; that stretch reads NAILICHALS…NSQHGHDAFL (310 aa). The active-site Nucleophile is the serine 151. Residue arginine 221 coordinates substrate. Active-site residues include aspartate 318 and histidine 351. Aspartate 352 serves as a coordination point for substrate.

Belongs to the AB hydrolase superfamily. MetX family. As to quaternary structure, homodimer.

It localises to the cytoplasm. It carries out the reaction L-homoserine + succinyl-CoA = O-succinyl-L-homoserine + CoA. It participates in amino-acid biosynthesis; L-methionine biosynthesis via de novo pathway; O-succinyl-L-homoserine from L-homoserine: step 1/1. Transfers a succinyl group from succinyl-CoA to L-homoserine, forming succinyl-L-homoserine. The polypeptide is Homoserine O-succinyltransferase (Hydrogenovibrio crunogenus (strain DSM 25203 / XCL-2) (Thiomicrospira crunogena)).